The chain runs to 101 residues: Ascorbate-specific PTS system EIIB component (101 aa).

In terms of domain architecture, PTS EIIB type-2 spans 3–96 (VRILAVCGNG…KLLEVIKEHF (94 aa)). Catalysis depends on C9, which acts as the Phosphocysteine intermediate. The residue at position 9 (C9) is a Phosphocysteine.

The protein localises to the cytoplasm. It carries out the reaction N(pros)-phospho-L-histidyl-[protein] + L-ascorbate(out) = L-ascorbate 6-phosphate(in) + L-histidyl-[protein]. In terms of biological role, the phosphoenolpyruvate-dependent sugar phosphotransferase system (sugar PTS), a major carbohydrate active transport system, catalyzes the phosphorylation of incoming sugar substrates concomitantly with their translocation across the cell membrane. The enzyme II UlaABC PTS system is involved in ascorbate transport. This is Ascorbate-specific PTS system EIIB component (ulaB) from Salmonella choleraesuis (strain SC-B67).